Reading from the N-terminus, the 302-residue chain is Rab effector Noc2 (302 aa).

In terms of domain architecture, RabBD spans 41-158 (QRRTQCLSPG…KRSGAWFYKG (118 aa)). An FYVE-type zinc finger spans residues 89-146 (GNGVSQCLLCGEMLGFLGSSSVFCKDCRKKVCTKCGIEASPGQKRPLWLCKICSEQRE). Zn(2+)-binding residues include Cys95, Cys98, Cys112, Cys115, Cys120, Cys123, Cys138, and Cys141. Disordered stretches follow at residues 174-194 (DPHF…SAEV) and 206-302 (VSSD…TTHY). Ser248 bears the Phosphoserine mark. Low complexity predominate over residues 258 to 269 (SHLSGSQSSLGS).

Recruited to dense-core vesicles through specific interaction with RAB27A in endocrine cells. Interacts with RAB3A, RAB3B, RAB3C and RAB3D. Interacts with ZYX. Highly expressed in pancreatic islets and parotid. High to moderate expression in adrenal gland, pituitary gland and ovary.

The protein localises to the cytoplasm. The protein resides in the cytoplasmic vesicle. It localises to the secretory vesicle membrane. Its function is as follows. Rab GTPase effector involved in the late steps of regulated exocytosis, both in endocrine and exocrine cells. Regulates the exocytosis of dense-core vesicles in neuroendocrine cells through interaction with RAB27A. Acts as a potential RAB3B effector protein in epithelial cells. The protein is Rab effector Noc2 (Rph3al) of Rattus norvegicus (Rat).